A 344-amino-acid chain; its full sequence is Meiotic recombination protein DMC1 homolog A (344 aa).

Position 133–140 (133–140) interacts with ATP; the sequence is GEFRSGKT. R235 lines the dsDNA pocket. Residues R235, F238, R241, R247, and R315 each contribute to the ssDNA site. R241 and R247 together coordinate dsDNA.

The protein belongs to the RecA family. DMC1 subfamily. Expressed in meiotic young panicles.

Its subcellular location is the nucleus. Functionally, recombinase that may participate in meiotic recombination, specifically in homologous strand assimilation, which is required for the resolution of meiotic double-strand breaks. Exhibits DNA-dependent ATPase activity when bound to single-stranded DNA (ssDNA). Mediates renaturation of homologous complementary strands as well as assimilation of single strands into homologous supercoiled duplexes leading to D-loop formation. Binds circular single-stranded DNA (ssDNA) and circular double-stranded DNA (dsDNA) in vitro. Catalyzes DNA homologous renaturation and DNA strand exchange. The rates of these activities are dependent on the state of ATP hydrolysis. Forms helical filaments along ssDNA and dsDNA, and promotes strand exchange between ssDNA and dsDNA with long DNA substrates of several thousand base pairs. The presence of the replication protein A is not required for this activity. Seems to be required for homologous pairing and subsequent chromosome segregation during male meiosis. May be not directly required for homologous pairing during male meiosis. Required for synaptonemal complex assembly and crossover formation. Functions redundantly with DMC1B. The polypeptide is Meiotic recombination protein DMC1 homolog A (Oryza sativa subsp. japonica (Rice)).